A 326-amino-acid polypeptide reads, in one-letter code: ATP-dependent 6-phosphofructokinase (326 aa).

Residue G12 coordinates ATP. 22 to 26 (RAIIK) contributes to the ADP binding site. ATP-binding positions include 73–74 (RF) and 103–106 (GDGS). Residue D104 coordinates Mg(2+). 126–128 (TID) lines the substrate pocket. D128 serves as the catalytic Proton acceptor. R155 is an ADP binding site. Substrate contacts are provided by residues R163 and 170–172 (MGH). Residues 186–188 (GSE), K212, and 215–217 (KRS) each bind ADP. Substrate contacts are provided by residues E224, K246, and 252-255 (HIQR).

Belongs to the phosphofructokinase type A (PFKA) family. ATP-dependent PFK group I subfamily. Prokaryotic clade 'B1' sub-subfamily. In terms of assembly, homotetramer. Mg(2+) serves as cofactor.

It is found in the cytoplasm. The enzyme catalyses beta-D-fructose 6-phosphate + ATP = beta-D-fructose 1,6-bisphosphate + ADP + H(+). It participates in carbohydrate degradation; glycolysis; D-glyceraldehyde 3-phosphate and glycerone phosphate from D-glucose: step 3/4. With respect to regulation, allosterically activated by ADP and other diphosphonucleosides, and allosterically inhibited by phosphoenolpyruvate. Its function is as follows. Catalyzes the phosphorylation of D-fructose 6-phosphate to fructose 1,6-bisphosphate by ATP, the first committing step of glycolysis. The protein is ATP-dependent 6-phosphofructokinase of Mycoplasmopsis pulmonis (strain UAB CTIP) (Mycoplasma pulmonis).